Reading from the N-terminus, the 277-residue chain is Alternative cytochrome c oxidase subunit 2 (277 aa).

At 1-40 (MAVALILLLIAIGSVLFHLFSPWWWTPIATNWGYIDDTIN) the chain is on the periplasmic side. Residues 41 to 61 (ITFWITGFVFTAVILFMAYCV) form a helical membrane-spanning segment. Over 62–83 (FRFHHKEGRQAAYNPENKKLEW) the chain is Cytoplasmic. A helical membrane pass occupies residues 84–104 (WLSVGTGVGVAAMLAPGLVVW). Topologically, residues 105-277 (HQFVTVPADA…VRAKYNSGDD (173 aa)) are periplasmic. Cu cation-binding residues include H190, C225, C229, and H233.

Belongs to the cytochrome c oxidase subunit 2 family.

It is found in the cell membrane. The enzyme catalyses 4 Fe(II)-[cytochrome c] + O2 + 8 H(+)(in) = 4 Fe(III)-[cytochrome c] + 2 H2O + 4 H(+)(out). In terms of biological role, cytochrome c oxidase is the component of the respiratory chain that catalyzes the reduction of oxygen to water. Subunits 1-3 form the functional core of the enzyme complex. Subunit 2 transfers the electrons from cytochrome c via its binuclear copper A center to the bimetallic center of the catalytic subunit 1. This is Alternative cytochrome c oxidase subunit 2 (coxM) from Bradyrhizobium diazoefficiens (strain JCM 10833 / BCRC 13528 / IAM 13628 / NBRC 14792 / USDA 110).